Reading from the N-terminus, the 514-residue chain is 1-pyrroline-5-carboxylate dehydrogenase (514 aa).

Residues Glu286 and Cys320 contribute to the active site.

It belongs to the aldehyde dehydrogenase family. RocA subfamily.

The catalysed reaction is L-glutamate 5-semialdehyde + NAD(+) + H2O = L-glutamate + NADH + 2 H(+). It participates in amino-acid degradation; L-proline degradation into L-glutamate; L-glutamate from L-proline: step 2/2. This is 1-pyrroline-5-carboxylate dehydrogenase from Staphylococcus epidermidis (strain ATCC 12228 / FDA PCI 1200).